Reading from the N-terminus, the 508-residue chain is MSASALSSIRFPGSISEYLQVASVLSLLLLLFKTAQLYLHRQWLLSSTQQFPSPPSHWLFGHKILKDQDLQDILTRIKNFPSACPQWLWGSKVRIQVYDPDYMKLILGRSDPKAHGSYRFLAPWIGRGLLLLDGQTWFQHRRMLTPAFHYDILKPYTEIMADSVHVMLDKWEQIVGQDSTLEIFQHITLMTLDTIMKCAFSHEGSVQLDRKYKSYIQAVEDLNNLFFLRVRNIFHQNDIIYRVSSNGCLANSACQLAHDHTDQVIKSRRSQLQDEEELEKLKKKRRLDFLDILLFARMENGKSLSDKDLRAEVDTFMFEGHDTTASGISWIFYALATNPEHQQRCRKEIQSLLGDGASITWNDLDKMPYTTMCIKEALRIYPPVPSVSRELSSPVTFPDGRSLPKGIHVMLSFYGLHHNPTVWPNPEVFDPSRFAPGSSRHSHSFLPFSGGARNCIGKQFAMNELKVAVALTLLRFELLPDPTRVPIPIPRIVLKSKNGIHLHLKKLQ.

An N-terminal signal peptide occupies residues Met-1–Leu-37. Residues Glu-319 and Cys-455 each contribute to the heme site.

This sequence belongs to the cytochrome P450 family. Requires heme as cofactor. In terms of tissue distribution, expressed in lung, but almost undetectable in the kidneys of five different strains.

It is found in the endoplasmic reticulum membrane. It localises to the microsome membrane. It carries out the reaction an organic molecule + reduced [NADPH--hemoprotein reductase] + O2 = an alcohol + oxidized [NADPH--hemoprotein reductase] + H2O + H(+). The catalysed reaction is dodecanoate + reduced [NADPH--hemoprotein reductase] + O2 = 11-hydroxydodecanoate + oxidized [NADPH--hemoprotein reductase] + H2O + H(+). The enzyme catalyses dodecanoate + reduced [NADPH--hemoprotein reductase] + O2 = 12-hydroxydodecanoate + oxidized [NADPH--hemoprotein reductase] + H2O + H(+). It catalyses the reaction (5Z,8Z,11Z,14Z)-eicosatetraenoate + reduced [NADPH--hemoprotein reductase] + O2 = 18-hydroxy-(5Z,8Z,11Z,14Z)-eicosatetraenoate + oxidized [NADPH--hemoprotein reductase] + H2O + H(+). It carries out the reaction (5Z,8Z,11Z,14Z)-eicosatetraenoate + reduced [NADPH--hemoprotein reductase] + O2 = 19-hydroxy-(5Z,8Z,11Z,14Z)-eicosatetraenoate + oxidized [NADPH--hemoprotein reductase] + H2O + H(+). The catalysed reaction is (5Z,8Z,11Z,14Z)-eicosatetraenoate + reduced [NADPH--hemoprotein reductase] + O2 = 20-hydroxy-(5Z,8Z,11Z,14Z)-eicosatetraenoate + oxidized [NADPH--hemoprotein reductase] + H2O + H(+). The enzyme catalyses (5Z,8Z,11Z,14Z,17Z)-eicosapentaenoate + reduced [NADPH--hemoprotein reductase] + O2 = 19-hydroxy-(5Z,8Z,11Z,14Z,17Z)-eicosapentaenoate + oxidized [NADPH--hemoprotein reductase] + H2O + H(+). It catalyses the reaction (5Z,8Z,11Z,14Z,17Z)-eicosapentaenoate + reduced [NADPH--hemoprotein reductase] + O2 = 20-hydroxy-(5Z,8Z,11Z,14Z,17Z)-eicosapentaenoate + oxidized [NADPH--hemoprotein reductase] + H2O + H(+). It carries out the reaction (5Z,8Z,11Z,14Z,17Z)-eicosapentaenoate + reduced [NADPH--hemoprotein reductase] + O2 = (17S,18R)-epoxy-(5Z,8Z,11Z,14Z)-eicosatetraenoate + oxidized [NADPH--hemoprotein reductase] + H2O + H(+). The catalysed reaction is (5Z,8Z,11Z,14Z,17Z)-eicosapentaenoate + reduced [NADPH--hemoprotein reductase] + O2 = (17R,18S)-epoxy-(5Z,8Z,11Z,14Z)-eicosatetraenoate + oxidized [NADPH--hemoprotein reductase] + H2O + H(+). It functions in the pathway lipid metabolism; fatty acid metabolism. Its activity is regulated as follows. Activated by cytochrome b5. The Vmax almost doubles in the presence of cytochrome b5. In terms of biological role, a cytochrome P450 monooxygenase involved in the metabolism of fatty acids and their oxygenated derivatives (oxylipins). Mechanistically, uses molecular oxygen inserting one oxygen atom into a substrate, and reducing the second into a water molecule, with two electrons provided by NADPH via cytochrome P450 reductase (CPR; NADPH-ferrihemoprotein reductase). Catalyzes predominantly the oxidation of the terminal carbon (omega-oxidation) of saturated and unsaturated fatty acids. May act as a major omega-hydroxylase for dodecanoic (lauric) acid in kidney. Participates in omega-hydroxylation of (5Z,8Z,11Z,14Z)-eicosatetraenoic acid (arachidonate) to 20-hydroxyeicosatetraenoic acid (20-HETE), a signaling molecule acting both as vasoconstrictive and natriuretic with overall effect on arterial blood pressure. Acts as an omega-hydroxylase and epoxidase toward (5Z,8Z,11Z,14Z,17Z)-eicosapentaenoc acid (EPA). Catalyzes the epoxidation of the last double bond of EPA with no preferred stereoselectivity, producing both (R,S) and (S,R) stereoisomers. Can also catalyze the omega-1 and omega-2 oxidation of fatty acids with lower efficiency. The sequence is that of Cytochrome P450 4A12B from Mus musculus (Mouse).